The following is a 286-amino-acid chain: Expansin-like protein 1 (286 aa).

The N-terminal stretch at 1-21 is a signal peptide; sequence MKTFVLFVILLCLTFLSISKS. Over 22-265 the chain is Extracellular; it reads ETCPFSQSLV…TGASIGTPSD (244 aa). An Expansin-like EG45 domain is found at 44–145; it reads AGNCGYENLM…YKVPCGVNGN (102 aa). Cystine bridges form between Cys47/Cys77 and Cys80/Cys140. Residues Asn82 and Asn89 are each glycosylated (N-linked (GlcNAc...) asparagine). The helical transmembrane segment at 266 to 286 threads the bilayer; the sequence is ASSLTLYALFSLTILFLVMLN.

This sequence belongs to the expansin family. Expansin A subfamily.

It is found in the membrane. Its function is as follows. May serve to lubricate the movement of the cellulose microfibrils during cell growth and wall extension and/or they may serve to maintain the fluid state of the slug cell wall. This is Expansin-like protein 1 (expl1) from Dictyostelium discoideum (Social amoeba).